The following is a 316-amino-acid chain: 4-hydroxy-3-methylbut-2-enyl diphosphate reductase (316 aa).

C12 is a binding site for [4Fe-4S] cluster. Residues H41 and H74 each contribute to the (2E)-4-hydroxy-3-methylbut-2-enyl diphosphate site. Residues H41 and H74 each contribute to the dimethylallyl diphosphate site. Isopentenyl diphosphate is bound by residues H41 and H74. Position 96 (C96) interacts with [4Fe-4S] cluster. H124 provides a ligand contact to (2E)-4-hydroxy-3-methylbut-2-enyl diphosphate. H124 contributes to the dimethylallyl diphosphate binding site. An isopentenyl diphosphate-binding site is contributed by H124. The active-site Proton donor is E126. A (2E)-4-hydroxy-3-methylbut-2-enyl diphosphate-binding site is contributed by T167. C197 provides a ligand contact to [4Fe-4S] cluster. (2E)-4-hydroxy-3-methylbut-2-enyl diphosphate is bound by residues S225, S226, N227, and S269. Dimethylallyl diphosphate-binding residues include S225, S226, N227, and S269. Residues S225, S226, N227, and S269 each coordinate isopentenyl diphosphate.

The protein belongs to the IspH family. Homodimer. Requires [4Fe-4S] cluster as cofactor.

The enzyme catalyses isopentenyl diphosphate + 2 oxidized [2Fe-2S]-[ferredoxin] + H2O = (2E)-4-hydroxy-3-methylbut-2-enyl diphosphate + 2 reduced [2Fe-2S]-[ferredoxin] + 2 H(+). It catalyses the reaction dimethylallyl diphosphate + 2 oxidized [2Fe-2S]-[ferredoxin] + H2O = (2E)-4-hydroxy-3-methylbut-2-enyl diphosphate + 2 reduced [2Fe-2S]-[ferredoxin] + 2 H(+). It functions in the pathway isoprenoid biosynthesis; dimethylallyl diphosphate biosynthesis; dimethylallyl diphosphate from (2E)-4-hydroxy-3-methylbutenyl diphosphate: step 1/1. Its pathway is isoprenoid biosynthesis; isopentenyl diphosphate biosynthesis via DXP pathway; isopentenyl diphosphate from 1-deoxy-D-xylulose 5-phosphate: step 6/6. In terms of biological role, catalyzes the conversion of 1-hydroxy-2-methyl-2-(E)-butenyl 4-diphosphate (HMBPP) into a mixture of isopentenyl diphosphate (IPP) and dimethylallyl diphosphate (DMAPP). Acts in the terminal step of the DOXP/MEP pathway for isoprenoid precursor biosynthesis. The protein is 4-hydroxy-3-methylbut-2-enyl diphosphate reductase of Pectobacterium carotovorum subsp. carotovorum (strain PC1).